The sequence spans 143 residues: Large ribosomal subunit protein uL11 (143 aa).

Belongs to the universal ribosomal protein uL11 family. As to quaternary structure, part of the ribosomal stalk of the 50S ribosomal subunit. Interacts with L10 and the large rRNA to form the base of the stalk. L10 forms an elongated spine to which L12 dimers bind in a sequential fashion forming a multimeric L10(L12)X complex. One or more lysine residues are methylated.

Functionally, forms part of the ribosomal stalk which helps the ribosome interact with GTP-bound translation factors. The chain is Large ribosomal subunit protein uL11 from Borreliella afzelii (strain PKo) (Borrelia afzelii).